Consider the following 334-residue polypeptide: Biotin synthase (334 aa).

The 231-residue stretch at 55-285 (GEGGGVHACS…AHPSKIIKFA (231 aa)) folds into the Radical SAM core domain. Residues Cys73, Cys77, and Cys80 each coordinate [4Fe-4S] cluster. The [2Fe-2S] cluster site is built by Cys152, Cys213, and Lys283.

It belongs to the radical SAM superfamily. Biotin synthase family. Homodimer. [4Fe-4S] cluster serves as cofactor. [2Fe-2S] cluster is required as a cofactor.

The catalysed reaction is (4R,5S)-dethiobiotin + (sulfur carrier)-SH + 2 reduced [2Fe-2S]-[ferredoxin] + 2 S-adenosyl-L-methionine = (sulfur carrier)-H + biotin + 2 5'-deoxyadenosine + 2 L-methionine + 2 oxidized [2Fe-2S]-[ferredoxin]. It participates in cofactor biosynthesis; biotin biosynthesis; biotin from 7,8-diaminononanoate: step 2/2. In terms of biological role, catalyzes the conversion of dethiobiotin (DTB) to biotin by the insertion of a sulfur atom into dethiobiotin via a radical-based mechanism. This chain is Biotin synthase, found in Chlorobaculum parvum (strain DSM 263 / NCIMB 8327) (Chlorobium vibrioforme subsp. thiosulfatophilum).